The primary structure comprises 260 residues: MAEELAGVRSGVVVSPHSDLSVDVLVLRISQQHNSSRRIDPRLSDGASEEISLVAAQAPQALPVSDVHFGGGTPTIIKPEDFLALMDLLRRSFAFRKTATIAVEIEPRTFTAEMAEALGAAEVSHVSLGVQSFDPIVQKATNRVQRKAQTTAAIENLRRIGISRINFDLMYGLPHQTVQSCVQSATAAVAMRPDRLAVFGYAHVPSYRKNQRLIDETALPDIAARAEQAVAVAETYLPNGAGAVAVLASLPLAAKSQPVL.

Residues 6 to 239 (AGVRSGVVVS…VAVAETYLPN (234 aa)) enclose the Radical SAM core domain.

This is an uncharacterized protein from Sinorhizobium fredii (strain NBRC 101917 / NGR234).